Here is a 247-residue protein sequence, read N- to C-terminus: MKNKLLFKIFLSLSLALSVYSINDKIIEVSNTSLAADVKNFTDLDEATKWGNKLIKQAKYSSDDKIALYEYTKDSSKINGPLRLAGGDINKLDSTTQDKVRRLDSSISKSTTPESVYVYRLLNLDYLTSIVGFTNEDLYKLQQTNNGQYDENLVRKLNNVMNSRIYREDGYSSTQLVSGAAVGGRPIELRLELPKGTKAAYLNSKDLTAYYGQQEVLLPRGTEYAVGSVELSNDKKKIIITAIVFKK.

The signal sequence occupies residues 1 to 35; it reads MKNKLLFKIFLSLSLALSVYSINDKIIEVSNTSLA. One can recognise a TR mART core domain in the interval 39-247; that stretch reads KNFTDLDEAT…IIITAIVFKK (209 aa). Catalysis depends on residues arginine 120, serine 173, and glutamate 215.

It to ADP-ribosyltransferase C3 of Clostridium.

Functionally, inhibits terminal differentiation of cultured mouse keratinocytes. In culture, also inhibits the differentiation of human keratinocytes. Probable ADP-ribosyltransferase. In Staphylococcus aureus, this protein is Epidermal cell differentiation inhibitor.